The following is a 399-amino-acid chain: MKMRFLGLVVCLVLWTLHSEGSGGKLTAVDPETNMNVSEIISYWGFPSEEYLVETEDGYILCLNRIPHGRKNHSDKGPKPVVFLQHGLLADSSNWVTNLANSSLGFILADAGFDVWMGNSRGNTWSRKHKTLSVSQDEFWAFSYDEMAKYDLPASINFILNKTGQEQVYYVGHSQGTTIGFIAFSQIPELAKRIKMFFALGPVASVAFCTSPMAKLGRLPDHLIKDLFGDKEFLPQSAFLKWLGTHVCTHVILKELCGNLCFLLCGFNERNLNMSRVDVYTTHSPAGTSVQNMLHWSQAVKFQKFQAFDWGSSAKNYFHYNQSYPPTYNVKDMLVPTAVWSGGHDWLADVYDVNILLTQITNLVFHESIPEWEHLDFIWGLDAPWRLYNKIINLMRKYQ.

The signal sequence occupies residues 1–27; the sequence is MKMRFLGLVVCLVLWTLHSEGSGGKLT. Residues 28 to 76 constitute a propeptide, removed in mature form; it reads AVDPETNMNVSEIISYWGFPSEEYLVETEDGYILCLNRIPHGRKNHSDK. 4 N-linked (GlcNAc...) asparagine glycosylation sites follow: N36, N72, N101, and N161. One can recognise an AB hydrolase-1 domain in the interval 80-380; it reads PVVFLQHGLL…EWEHLDFIWG (301 aa). Residue S174 is the Charge relay system of the active site. Residues N273 and N321 are each glycosylated (N-linked (GlcNAc...) asparagine). Catalysis depends on H374, which acts as the Charge relay system.

Belongs to the AB hydrolase superfamily. Lipase family. As to quaternary structure, monomer. Glycosylation is not essential for catalytic activity. In terms of tissue distribution, most abundantly expressed in brain, lung, kidney and mammary gland, a moderate expression seen in placenta and expressed at low levels in the liver and heart.

The protein resides in the lysosome. It carries out the reaction a sterol ester + H2O = a sterol + a fatty acid + H(+). It catalyses the reaction cholesteryl (9Z-octadecenoate) + H2O = cholesterol + (9Z)-octadecenoate + H(+). The catalysed reaction is a triacylglycerol + H2O = a 1,2-diacylglycerol + a fatty acid + H(+). The enzyme catalyses 1,2-di-(9Z-octadecenoyl)-glycerol + (9Z)-octadecenoate + H(+) = 1,2,3-tri-(9Z-octadecenoyl)-glycerol + H2O. It carries out the reaction a 1,2-diacylglycerol + H2O = a 1-acylglycerol + a fatty acid + H(+). It catalyses the reaction 1,2-di-(9Z-octadecenoyl)-glycerol + H2O = 1-(9Z-octadecenoyl)-glycerol + (9Z)-octadecenoate + H(+). The catalysed reaction is a 1,3-diacylglycerol + H2O = a 1-acylglycerol + a fatty acid + H(+). The enzyme catalyses 1,3-di-(9Z-octadecenoyl)-glycerol + H2O = 1-(9Z-octadecenoyl)-glycerol + (9Z)-octadecenoate + H(+). Catalyzes the deacylation of cholesteryl ester core lipids of endocytosed low density lipoproteins to generate free fatty acids and cholesterol. Hydrolyzes triglycerides (1,2,3-triacylglycerol) and diglycerides (such as 1,2-diacylglycerol and 1,3-diacylglycerol) with preference for the acyl moieties at the sn-1 or sn-3 positions. This is Lysosomal acid lipase/cholesteryl ester hydrolase (LIPA) from Homo sapiens (Human).